We begin with the raw amino-acid sequence, 380 residues long: tRNA-specific 2-thiouridylase MnmA (380 aa).

ATP contacts are provided by residues 11–18 (GMSGGVDS) and Met-37. The interval 92–94 (NPD) is interaction with target base in tRNA. The active-site Nucleophile is the Cys-97. Cysteines 97 and 197 form a disulfide. Residue Gly-121 participates in ATP binding. Residues 147–149 (KDQ) are interaction with tRNA. Cys-197 acts as the Cysteine persulfide intermediate in catalysis. Residues 331 to 332 (RY) form an interaction with tRNA region.

Belongs to the MnmA/TRMU family.

It is found in the cytoplasm. The catalysed reaction is S-sulfanyl-L-cysteinyl-[protein] + uridine(34) in tRNA + AH2 + ATP = 2-thiouridine(34) in tRNA + L-cysteinyl-[protein] + A + AMP + diphosphate + H(+). Functionally, catalyzes the 2-thiolation of uridine at the wobble position (U34) of tRNA, leading to the formation of s(2)U34. The polypeptide is tRNA-specific 2-thiouridylase MnmA (Karelsulcia muelleri (strain GWSS) (Sulcia muelleri)).